Reading from the N-terminus, the 265-residue chain is Type II pantothenate kinase (265 aa).

6-13 serves as a coordination point for ATP; the sequence is DAGGTLIK. The active-site Proton acceptor is Glu-70. Residues Thr-99, 121-125, Tyr-137, and Ser-225 each bind ATP; that span reads GGMIQ.

It belongs to the type II pantothenate kinase family. As to quaternary structure, homodimer.

The protein localises to the cytoplasm. It catalyses the reaction (R)-pantothenate + ATP = (R)-4'-phosphopantothenate + ADP + H(+). It functions in the pathway cofactor biosynthesis; coenzyme A biosynthesis; CoA from (R)-pantothenate: step 1/5. Functionally, catalyzes the phosphorylation of pantothenate (Pan), the first step in CoA biosynthesis. In Staphylococcus epidermidis (strain ATCC 35984 / DSM 28319 / BCRC 17069 / CCUG 31568 / BM 3577 / RP62A), this protein is Type II pantothenate kinase.